The primary structure comprises 462 residues: Argininosuccinate lyase (462 aa).

Belongs to the lyase 1 family. Argininosuccinate lyase subfamily.

The protein localises to the cytoplasm. It carries out the reaction 2-(N(omega)-L-arginino)succinate = fumarate + L-arginine. Its pathway is amino-acid biosynthesis; L-arginine biosynthesis; L-arginine from L-ornithine and carbamoyl phosphate: step 3/3. This chain is Argininosuccinate lyase, found in Bacillus thuringiensis (strain Al Hakam).